Consider the following 231-residue polypeptide: Ribose-5-phosphate isomerase A (231 aa).

Substrate is bound by residues 31–34 (TGST), 86–89 (DGAD), and 100–103 (KGLG). Glu109 serves as the catalytic Proton acceptor. A substrate-binding site is contributed by Lys127.

The protein belongs to the ribose 5-phosphate isomerase family. In terms of assembly, homodimer.

It carries out the reaction aldehydo-D-ribose 5-phosphate = D-ribulose 5-phosphate. It functions in the pathway carbohydrate degradation; pentose phosphate pathway; D-ribose 5-phosphate from D-ribulose 5-phosphate (non-oxidative stage): step 1/1. In terms of biological role, catalyzes the reversible conversion of ribose-5-phosphate to ribulose 5-phosphate. The polypeptide is Ribose-5-phosphate isomerase A (Gluconobacter oxydans (strain 621H) (Gluconobacter suboxydans)).